We begin with the raw amino-acid sequence, 415 residues long: Histidine--tRNA ligase (415 aa).

It belongs to the class-II aminoacyl-tRNA synthetase family. Homodimer.

It is found in the cytoplasm. It carries out the reaction tRNA(His) + L-histidine + ATP = L-histidyl-tRNA(His) + AMP + diphosphate + H(+). The chain is Histidine--tRNA ligase from Rickettsia akari (strain Hartford).